We begin with the raw amino-acid sequence, 54 residues long: Large ribosomal subunit protein bL33 (54 aa).

Belongs to the bacterial ribosomal protein bL33 family.

The protein is Large ribosomal subunit protein bL33 of Parafrankia sp. (strain EAN1pec).